We begin with the raw amino-acid sequence, 437 residues long: Glutamyl-tRNA reductase (437 aa).

Substrate is bound by residues 46-49, Ser-111, 116-118, and Gln-122; these read TCNR and ERE. Cys-47 serves as the catalytic Nucleophile. 192-197 serves as a coordination point for NADP(+); sequence GTGAYA. The disordered stretch occupies residues 413–437; sequence PDVPEETAPSTRQDPSDTPRPRAVG. A compositionally biased stretch (basic and acidic residues) spans 426-437; it reads DPSDTPRPRAVG.

It belongs to the glutamyl-tRNA reductase family. In terms of assembly, homodimer.

It catalyses the reaction (S)-4-amino-5-oxopentanoate + tRNA(Glu) + NADP(+) = L-glutamyl-tRNA(Glu) + NADPH + H(+). It functions in the pathway porphyrin-containing compound metabolism; protoporphyrin-IX biosynthesis; 5-aminolevulinate from L-glutamyl-tRNA(Glu): step 1/2. In terms of biological role, catalyzes the NADPH-dependent reduction of glutamyl-tRNA(Glu) to glutamate 1-semialdehyde (GSA). The protein is Glutamyl-tRNA reductase of Kocuria rhizophila (strain ATCC 9341 / DSM 348 / NBRC 103217 / DC2201).